Reading from the N-terminus, the 467-residue chain is Fumarate hydratase class II (467 aa).

Residues 98–100, Arg126, 129–132, 139–141, and Thr187 contribute to the substrate site; these read SGT, HPND, and SSN. His188 (proton donor/acceptor) is an active-site residue. Residue Ser318 is part of the active site. Residues Ser319 and 324–326 contribute to the substrate site; that span reads KVN.

This sequence belongs to the class-II fumarase/aspartase family. Fumarase subfamily. As to quaternary structure, homotetramer.

The protein localises to the cytoplasm. It carries out the reaction (S)-malate = fumarate + H2O. It participates in carbohydrate metabolism; tricarboxylic acid cycle; (S)-malate from fumarate: step 1/1. Inhibited by ATP, citrate and S-2,3-dicarboxyaziridine. Functionally, involved in the TCA cycle. FumC seems to be a backup enzyme for FumA under conditions of iron limitation and oxidative stress. Catalyzes the stereospecific interconversion of fumarate to L-malate. In Escherichia coli (strain K12), this protein is Fumarate hydratase class II.